Here is a 298-residue protein sequence, read N- to C-terminus: Bifunctional protein FolD (298 aa).

NADP(+)-binding positions include 165-167, serine 190, and isoleucine 231; that span reads GRS.

The protein belongs to the tetrahydrofolate dehydrogenase/cyclohydrolase family. In terms of assembly, homodimer.

The enzyme catalyses (6R)-5,10-methylene-5,6,7,8-tetrahydrofolate + NADP(+) = (6R)-5,10-methenyltetrahydrofolate + NADPH. It catalyses the reaction (6R)-5,10-methenyltetrahydrofolate + H2O = (6R)-10-formyltetrahydrofolate + H(+). The protein operates within one-carbon metabolism; tetrahydrofolate interconversion. Functionally, catalyzes the oxidation of 5,10-methylenetetrahydrofolate to 5,10-methenyltetrahydrofolate and then the hydrolysis of 5,10-methenyltetrahydrofolate to 10-formyltetrahydrofolate. This Prochlorococcus marinus (strain MIT 9301) protein is Bifunctional protein FolD.